We begin with the raw amino-acid sequence, 449 residues long: Phosphoglucosamine mutase (449 aa).

Residue Ser-101 is the Phosphoserine intermediate of the active site. Mg(2+)-binding residues include Ser-101, Asp-242, Asp-244, and Asp-246. Phosphoserine is present on Ser-101.

The protein belongs to the phosphohexose mutase family. The cofactor is Mg(2+). Post-translationally, activated by phosphorylation.

The catalysed reaction is alpha-D-glucosamine 1-phosphate = D-glucosamine 6-phosphate. Its function is as follows. Catalyzes the conversion of glucosamine-6-phosphate to glucosamine-1-phosphate. The protein is Phosphoglucosamine mutase of Bradyrhizobium sp. (strain BTAi1 / ATCC BAA-1182).